The chain runs to 286 residues: 4-diphosphocytidyl-2-C-methyl-D-erythritol kinase (286 aa).

Lys-11 is an active-site residue. Residue 94–104 coordinates ATP; that stretch reads PMGGGIGGGSS. Residue Asp-136 is part of the active site.

This sequence belongs to the GHMP kinase family. IspE subfamily.

It carries out the reaction 4-CDP-2-C-methyl-D-erythritol + ATP = 4-CDP-2-C-methyl-D-erythritol 2-phosphate + ADP + H(+). It functions in the pathway isoprenoid biosynthesis; isopentenyl diphosphate biosynthesis via DXP pathway; isopentenyl diphosphate from 1-deoxy-D-xylulose 5-phosphate: step 3/6. Catalyzes the phosphorylation of the position 2 hydroxy group of 4-diphosphocytidyl-2C-methyl-D-erythritol. The polypeptide is 4-diphosphocytidyl-2-C-methyl-D-erythritol kinase (Pseudomonas entomophila (strain L48)).